The sequence spans 607 residues: UvrABC system protein C (607 aa).

Residues 15 to 93 (RKPGVYRMLD…IKELKPPYNI (79 aa)) enclose the GIY-YIG domain. The 36-residue stretch at 203-238 (REVADQLSTDMEAAAAALEFEKAALLRDQLAAIQAV) folds into the UVR domain. The segment covering 542–551 (HRARRGKARK) has biased composition (basic residues). Residues 542–561 (HRARRGKARKQSTLDEIPGI) form a disordered region.

Belongs to the UvrC family. Interacts with UvrB in an incision complex.

The protein localises to the cytoplasm. Its function is as follows. The UvrABC repair system catalyzes the recognition and processing of DNA lesions. UvrC both incises the 5' and 3' sides of the lesion. The N-terminal half is responsible for the 3' incision and the C-terminal half is responsible for the 5' incision. The protein is UvrABC system protein C of Alcanivorax borkumensis (strain ATCC 700651 / DSM 11573 / NCIMB 13689 / SK2).